A 303-amino-acid polypeptide reads, in one-letter code: Lipoyl synthase (303 aa).

C34, C39, C45, C60, C64, C67, and S273 together coordinate [4Fe-4S] cluster. The Radical SAM core domain occupies 46–262 (WSKKHATVMI…ERVARTKGFL (217 aa)).

It belongs to the radical SAM superfamily. Lipoyl synthase family. The cofactor is [4Fe-4S] cluster.

It localises to the cytoplasm. The enzyme catalyses [[Fe-S] cluster scaffold protein carrying a second [4Fe-4S](2+) cluster] + N(6)-octanoyl-L-lysyl-[protein] + 2 oxidized [2Fe-2S]-[ferredoxin] + 2 S-adenosyl-L-methionine + 4 H(+) = [[Fe-S] cluster scaffold protein] + N(6)-[(R)-dihydrolipoyl]-L-lysyl-[protein] + 4 Fe(3+) + 2 hydrogen sulfide + 2 5'-deoxyadenosine + 2 L-methionine + 2 reduced [2Fe-2S]-[ferredoxin]. Its pathway is protein modification; protein lipoylation via endogenous pathway; protein N(6)-(lipoyl)lysine from octanoyl-[acyl-carrier-protein]: step 2/2. Catalyzes the radical-mediated insertion of two sulfur atoms into the C-6 and C-8 positions of the octanoyl moiety bound to the lipoyl domains of lipoate-dependent enzymes, thereby converting the octanoylated domains into lipoylated derivatives. This is Lipoyl synthase from Rickettsia bellii (strain OSU 85-389).